A 131-amino-acid polypeptide reads, in one-letter code: Gem-associated protein 7 (131 aa).

Position 1 is an N-acetylmethionine (M1). One can recognise an SUZ-C domain in the interval 1–29; it reads MQTPVNIPVPVLRLPRGPDGFSRGFAPDG. T3 carries the post-translational modification Phosphothreonine. Residues 65–131 form the Sm domain; sequence RYLRSLLAMV…SDIISYTFKP (67 aa).

Belongs to the gemin-7 family. As to quaternary structure, part of the core SMN complex that contains SMN1, GEMIN2/SIP1, DDX20/GEMIN3, GEMIN4, GEMIN5, GEMIN6, GEMIN7, GEMIN8 and STRAP/UNRIP. Part of the SMN-Sm complex that contains SMN1, GEMIN2/SIP1, DDX20/GEMIN3, GEMIN4, GEMIN5, GEMIN6, GEMIN7, GEMIN8, STRAP/UNRIP and the Sm proteins SNRPB, SNRPD1, SNRPD2, SNRPD3, SNRPE, SNRPF and SNRPG. Interacts with GEMIN6; the interaction is direct. Interacts with STRAP/UNRIP; the interaction is direct. Interacts with GEMIN8; the interaction is direct. Interacts with SNRPB, SNRPD2, SNRPD3 and SNRPE; the interaction is direct.

The protein localises to the nucleus. Its subcellular location is the nucleoplasm. It localises to the gem. The protein resides in the cytoplasm. Its function is as follows. The SMN complex catalyzes the assembly of small nuclear ribonucleoproteins (snRNPs), the building blocks of the spliceosome, and thereby plays an important role in the splicing of cellular pre-mRNAs. Most spliceosomal snRNPs contain a common set of Sm proteins SNRPB, SNRPD1, SNRPD2, SNRPD3, SNRPE, SNRPF and SNRPG that assemble in a heptameric protein ring on the Sm site of the small nuclear RNA to form the core snRNP (Sm core). In the cytosol, the Sm proteins SNRPD1, SNRPD2, SNRPE, SNRPF and SNRPG are trapped in an inactive 6S pICln-Sm complex by the chaperone CLNS1A that controls the assembly of the core snRNP. To assemble core snRNPs, the SMN complex accepts the trapped 5Sm proteins from CLNS1A forming an intermediate. Binding of snRNA inside 5Sm triggers eviction of the SMN complex, thereby allowing binding of SNRPD3 and SNRPB to complete assembly of the core snRNP. This is Gem-associated protein 7 (GEMIN7) from Homo sapiens (Human).